A 228-amino-acid chain; its full sequence is MTKIDLLARVFVIATIIALATAVDYYKLKCPPKTKHTMCIYGTNSHPSRNCGVVKGSGPTDQEKREILKEHNDYGHKVASGEEKRGVNGGQPAAKNMEDMTWDDELAKVAQTWANQCTINHDKCRSVSRFSVGQNLASKSTTGNDFPPVVELIQLWENEVSDFDKNNIKSLPASGISKTGHYTQMVWAKSNKLGCGSIKHHKDGWNKHFLVCNYGPSGNYLGQSVYEV.

The N-terminal stretch at 1 to 22 is a signal peptide; the sequence is MTKIDLLARVFVIATIIALATA. Intrachain disulfides connect Cys-30/Cys-124, Cys-51/Cys-117, and Cys-195/Cys-212. Residues 69-214 enclose the SCP domain; that stretch reads KEHNDYGHKV…WNKHFLVCNY (146 aa).

This sequence belongs to the CRISP family. Venom allergen 5-like subfamily. Expressed by the venom gland.

The protein localises to the secreted. In Rhynchium brunneum (Potter wasp), this protein is Venom allergen 5.